The primary structure comprises 542 residues: Phosphoacetylglucosamine mutase 2 (542 aa).

The active-site Phosphoserine intermediate is the S77. S77 serves as a coordination point for Mg(2+). S77 and S82 each carry phosphoserine. Mg(2+)-binding residues include D292, D294, and D296. Substrate is bound by residues E385–N387, R510–T514, and R519.

Belongs to the phosphohexose mutase family. It depends on Mg(2+) as a cofactor.

Its subcellular location is the cytoplasm. The protein localises to the nucleus. The enzyme catalyses N-acetyl-alpha-D-glucosamine 1-phosphate = N-acetyl-D-glucosamine 6-phosphate. Its pathway is nucleotide-sugar biosynthesis; UDP-N-acetyl-alpha-D-glucosamine biosynthesis; N-acetyl-alpha-D-glucosamine 1-phosphate from alpha-D-glucosamine 6-phosphate (route I): step 2/2. In terms of biological role, catalyzes the conversion of GlcNAc-6-P into GlcNAc-1-P during the synthesis of uridine diphosphate/UDP-GlcNAc, which is a biosynthetic precursor of chitin and also supplies the amino sugars for N-linked oligosaccharides of glycoproteins. The protein is Phosphoacetylglucosamine mutase 2 of Schizosaccharomyces pombe (strain 972 / ATCC 24843) (Fission yeast).